The sequence spans 581 residues: Polypeptide N-acetylgalactosaminyltransferase 12 (581 aa).

The Cytoplasmic segment spans residues methionine 1 to glutamate 19. A helical; Signal-anchor for type II membrane protein membrane pass occupies residues alanine 20–leucine 37. The Lumenal portion of the chain corresponds to arginine 38–leucine 581. The interval alanine 43–arginine 67 is disordered. Disulfide bonds link cysteine 125/cysteine 358, cysteine 349/cysteine 422, cysteine 458/cysteine 479, cysteine 506/cysteine 521, and cysteine 547/cysteine 566. A catalytic subdomain A region spans residues leucine 135 to arginine 244. Substrate-binding residues include aspartate 176 and arginine 205. The Mn(2+) site is built by aspartate 228 and histidine 230. The tract at residues valine 304–proline 366 is catalytic subdomain B. Tryptophan 335 is a binding site for substrate. Position 363 (histidine 363) interacts with Mn(2+). Substrate is bound at residue tyrosine 371. The 133-residue stretch at phenylalanine 445 to lysine 577 folds into the Ricin B-type lectin domain.

The protein belongs to the glycosyltransferase 2 family. GalNAc-T subfamily. It depends on Mn(2+) as a cofactor. Widely expressed at different levels of expression. Highly expressed in digestive organs such as small intestine, stomach, pancreas and colon. Expressed at intermediate level in testis, thyroid gland and spleen. Weakly expressed in whole brain, cerebral cortex, cerebellum, fetal brain, bone marrow, thymus, leukocytes, heart, skeletal muscle, liver, lung, esophagus, kidney, adrenal gland, mammary gland, uterus, placenta, ovary and prostate.

Its subcellular location is the golgi apparatus membrane. The catalysed reaction is L-seryl-[protein] + UDP-N-acetyl-alpha-D-galactosamine = a 3-O-[N-acetyl-alpha-D-galactosaminyl]-L-seryl-[protein] + UDP + H(+). The enzyme catalyses L-threonyl-[protein] + UDP-N-acetyl-alpha-D-galactosamine = a 3-O-[N-acetyl-alpha-D-galactosaminyl]-L-threonyl-[protein] + UDP + H(+). It participates in protein modification; protein glycosylation. Catalyzes the initial reaction in O-linked oligosaccharide biosynthesis, the transfer of an N-acetyl-D-galactosamine residue to a serine or threonine residue on the protein receptor. Has activity toward non-glycosylated peptides such as Muc5AC, Muc1a and EA2, and no detectable activity with Muc2 and Muc7. Displays enzymatic activity toward the Gal-NAc-Muc5AC glycopeptide, but no detectable activity to mono-GalNAc-glycosylated Muc1a, Muc2, Muc7 and EA2. May play an important role in the initial step of mucin-type oligosaccharide biosynthesis in digestive organs. The chain is Polypeptide N-acetylgalactosaminyltransferase 12 (GALNT12) from Homo sapiens (Human).